The chain runs to 323 residues: MCSTRKTSVMDEKVIENEEIHFQENSNGFSADLTIHQDKLKQISKTGLNLEKEHIFNMPSSLTKAFKTAFKRKNEIFYCVSTKEMSVDIKDVSGQVYLPLITKQEIQQKLMKIDPSVRSKISMIHLGAVKILLTAQFRQGIDTSVKMALIDDRIVNRKDSLLGAARGNLAYGKFMFTVYPKFALSLQSKNLDKTLSFIHQFERKDLMKTGDKVFTVTYLIGYALTNSHHSIEYRKNSNIEIEEVFKDIGQIEESPFCDISPIDENWTMDIARNKKSIATGSSSRRNFRIDESLLENKDENLLRSMSTKIDTLGKKLSLIYDNE.

The stretch at 292-322 (SLLENKDENLLRSMSTKIDTLGKKLSLIYDN) forms a coiled coil.

The protein belongs to the caulimoviridae movement protein family. Homotrimer, through the coiled-coil domain. Interacts with VAP.

The protein localises to the host cell junction. It localises to the host plasmodesma. Its function is as follows. Transports viral genome to neighboring plant cells directly through plasmosdesmata, without any budding. The movement protein allows efficient cell to cell propagation, by bypassing the host cell wall barrier. Acts by forming tubules structures that increase the size exclusion limit (SEL) of plasmodesmata, thereby allowing viral ribonucleocapsids to spread directly to neighboring cells. In Figwort mosaic virus (strain DxS) (FMV), this protein is Movement protein.